The sequence spans 527 residues: Peptide chain release factor 3 (527 aa).

In terms of domain architecture, tr-type G spans 9 to 277 (AKRRTFAIIS…AVVNWAPKPL (269 aa)). Residues 18–25 (SHPDAGKT), 86–90 (DTPGH), and 140–143 (NKLD) each bind GTP.

It belongs to the TRAFAC class translation factor GTPase superfamily. Classic translation factor GTPase family. PrfC subfamily.

It is found in the cytoplasm. Functionally, increases the formation of ribosomal termination complexes and stimulates activities of RF-1 and RF-2. It binds guanine nucleotides and has strong preference for UGA stop codons. It may interact directly with the ribosome. The stimulation of RF-1 and RF-2 is significantly reduced by GTP and GDP, but not by GMP. This Pseudomonas savastanoi pv. phaseolicola (strain 1448A / Race 6) (Pseudomonas syringae pv. phaseolicola (strain 1448A / Race 6)) protein is Peptide chain release factor 3.